The sequence spans 183 residues: Large ribosomal subunit protein uL6 (183 aa).

This sequence belongs to the universal ribosomal protein uL6 family. As to quaternary structure, part of the 50S ribosomal subunit.

In terms of biological role, this protein binds to the 23S rRNA, and is important in its secondary structure. It is located near the subunit interface in the base of the L7/L12 stalk, and near the tRNA binding site of the peptidyltransferase center. The sequence is that of Large ribosomal subunit protein uL6 from Chlamydia pneumoniae (Chlamydophila pneumoniae).